Consider the following 732-residue polypeptide: MSEQSKCPVTGRTAGHPVAGGGMSNRDWWPNQLPLDMLHQHSSLVNPMGEAFRYKEEFKKLDLGAVKKDLYALMTDSQEWWPADYGHYGGLFIRMAWHSAGTYRTSDGRGGGGTGNQRFAPLNSWPDNANLDKARRLLWPIKQKYGKMLSWADLMILAGNCALESMGFRTFGFGGGRVDIWEPEEDIYWGKEVEWLGSNRYSGERDLENPLAAVQMGLIYVNPEGPDGNPDPVAAGRDIRETFARMAMNDEETVALVAGGHTFGKCHGVGDPNLIGPEPEAAPIEEQGLGWKSGYGSGKGDETMTSGLEGAWTPDPIHWDMGYLGMLFKYEWELTKSPAGAWQWKPKDVAEEDLAPAAHDPSKRVPTMMTTADLAMRMDPIYGPISRRYYEHPDQFADAFARAWFKLTHRDMGPKSRYLGAEVPAEDLIWQDPVPAVDHELITEGEIAELKMRILASGLPIPELVSTAWASASTFRGSDKRGGANGARIRLAPQKEWEVNQPEQLQRVLHELEKIRDTFNGEQSGGKRVSLADLIVLGGCAAVEEAARRAGHDVTVPFAPGRTDASQAETDVESFAALEPLADGFRNYAKRKYSVTPEEMLIDRSQLLTLTAPEMTVLVGGLRVLGINFRQSPHGVFTRHPETLTNDFFVNLLDMGTEWKPVSHEHDTFEGRDRKTGEPSWSATRVDLIFGSNARLRAIAEVYGSDDAQEKFVHDFVAAWDKVMNLDRFDLS.

The tract at residues 1–23 (MSEQSKCPVTGRTAGHPVAGGGM) is disordered. Residues 97–220 (WHSAGTYRTS…LAAVQMGLIY (124 aa)) constitute a cross-link (tryptophyl-tyrosyl-methioninium (Trp-Tyr) (with M-246)). His-98 functions as the Proton acceptor in the catalytic mechanism. Positions 220-246 (YVNPEGPDGNPDPVAAGRDIRETFARM) form a cross-link, tryptophyl-tyrosyl-methioninium (Tyr-Met) (with W-97). Residue His-261 coordinates heme b.

It belongs to the peroxidase family. Peroxidase/catalase subfamily. Homodimer or homotetramer. It depends on heme b as a cofactor. Formation of the three residue Trp-Tyr-Met cross-link is important for the catalase, but not the peroxidase activity of the enzyme.

It catalyses the reaction H2O2 + AH2 = A + 2 H2O. The catalysed reaction is 2 H2O2 = O2 + 2 H2O. Its function is as follows. Bifunctional enzyme with both catalase and broad-spectrum peroxidase activity. This is Catalase-peroxidase from Chlorobium limicola (strain DSM 245 / NBRC 103803 / 6330).